Reading from the N-terminus, the 195-residue chain is 3-isopropylmalate dehydratase small subunit (195 aa).

The protein belongs to the LeuD family. LeuD type 1 subfamily. In terms of assembly, heterodimer of LeuC and LeuD.

It carries out the reaction (2R,3S)-3-isopropylmalate = (2S)-2-isopropylmalate. The protein operates within amino-acid biosynthesis; L-leucine biosynthesis; L-leucine from 3-methyl-2-oxobutanoate: step 2/4. Functionally, catalyzes the isomerization between 2-isopropylmalate and 3-isopropylmalate, via the formation of 2-isopropylmaleate. The protein is 3-isopropylmalate dehydratase small subunit of Salinispora tropica (strain ATCC BAA-916 / DSM 44818 / JCM 13857 / NBRC 105044 / CNB-440).